Here is a 1218-residue protein sequence, read N- to C-terminus: MYIEEIILDGFKSYPTKTVIGPFHPQFNAITGLNGSGKSNVLDAICFVMGINNLNLIRVNRLDELIYKQGQAGITKGSVTIKFNNEEKPSPLQEPYRDMKNITITRQIVLGGRNRYLLNSHNAKPKDISDFFQSLKLNINNPHFLIMQGKITKVINMKPIELLGLIEESSGTKLYEVKRTNAIKLMVKKDQKLGEINKVLFEEIEPTLVKLKKEKEEYNKFVSNNEEIEKYEKVEIAYKYYVAKKMMTKCEEKIEDAKSEEKILEKGIKEIDKDIEKYKIEKEKIVKETNTASEPMKILISQKEELEKKISQLKSEAKMENKEKAKEKRRREDIKKEINNLQNKLDDYQKNNEKNNKNLKSYEDLKKKIEILKEELNEKQLTMNCLLSAGTNNNEYTGSFREQLKNYKTNLSKAETQINNFLQNNKHLEKEIMTLKEQRKKYEKEYNEISKEKDIEEKKKKLCEQELDKLNKEYNNFMELDTLKTDKNILYNDMEKLQQELQVLKNIINSVKIDYKIPSNMKSTDVLGQIYKLIKIKKEYINTALAVHLILGGKLTYLLVQNKEHSKRLFEYNNFSSGSKRVTLLPLEDCVISREVHEKHIEECRRNVGLNIKDKNDVIYFLDIMEYDKNLERIIQYLFNGTLICSNVDLCKKITYNPNKKLSYTTITLEGDKFDTSGSMSGGSNKNINLFLLNYEKYKHKKEQYHDNENKLKEVSEKLKSLEKAEEKKKIISKELQIYENNLNNIENRMETSKYGSVNKKIEEHKNEIDKGRNELSELYKEQKKLTEVIRKLEKDISEYEANKDKKEEDLKETIKKLKNKIKQLETEEHKKKEEIDDVLLQIENYKKQKEKETNDLSSTDEIINEIEKKIEDIEKNINITKENLKELENKITELQSSFSSYENEMKHVVKKIEDLEKKKSENILDLKKLENTLLDLQKDLKTSSDTVKYLYKTHVWIESYEPLFNKKYTPYDFENFRHDVIQKKIQALQNEQNKLSININRKAVQMYEQVQVDYKDLVTKKSQVEEDKKKIQEVIADLDVKKSESLLAMYQQINEYFQAIFSTLLNNAQAKLSIVDGDLANGIEMKIAFNNNWKESLTELSGGQRSLLALSLILALLKVRTVPMYILDEIDAALDLNHTQNIGDMIRTQFPHSQFIIVSLKEGMFSHADVLFKMRFIDGISTVNRHALDIRQNTNKKEVQEVKRRRVTIHDKEPDHD.

32-39 contacts ATP; sequence GLNGSGKS. Residues 209–517 adopt a coiled-coil conformation; it reads VKLKKEKEEY…INSVKIDYKI (309 aa). Residues 525–654 form the SMC hinge domain; that stretch reads DVLGQIYKLI…CSNVDLCKKI (130 aa). Coiled coils occupy residues 693-949 and 978-1045; these read LNYE…DTVK and RHDV…KKSE.

It belongs to the SMC family. SMC2 subfamily.

The protein localises to the nucleus. In terms of biological role, may play a role in the conversion of interphase chromatin into condensed chromosomes. This is Structural maintenance of chromosomes protein 2 from Plasmodium falciparum (isolate 3D7).